Reading from the N-terminus, the 263-residue chain is Hydroxyacylglutathione hydrolase (263 aa).

Histidine 56, histidine 58, aspartate 60, histidine 61, histidine 115, aspartate 135, and histidine 175 together coordinate Zn(2+).

The protein belongs to the metallo-beta-lactamase superfamily. Glyoxalase II family. As to quaternary structure, monomer. The cofactor is Zn(2+).

The catalysed reaction is an S-(2-hydroxyacyl)glutathione + H2O = a 2-hydroxy carboxylate + glutathione + H(+). Its pathway is secondary metabolite metabolism; methylglyoxal degradation; (R)-lactate from methylglyoxal: step 2/2. Thiolesterase that catalyzes the hydrolysis of S-D-lactoyl-glutathione to form glutathione and D-lactic acid. This Polaromonas sp. (strain JS666 / ATCC BAA-500) protein is Hydroxyacylglutathione hydrolase.